A 260-amino-acid polypeptide reads, in one-letter code: Snake venom serine protease homolog KN7 (260 aa).

An N-terminal signal peptide occupies residues 1-18 (MVLIRVLANLLILQLSYA). Positions 19–24 (QKSSEL) are excised as a propeptide. The Peptidase S1 domain maps to 25-251 (IIGGDECNIN…HLDWIKSIIA (227 aa)). Cystine bridges form between C31/C165, C52/C68, C100/C258, C144/C212, C176/C191, and C202/C227. N-linked (GlcNAc...) asparagine glycans are attached at residues N83, N123, and N124.

The protein belongs to the peptidase S1 family. Snake venom subfamily. In terms of tissue distribution, expressed by the venom gland.

It is found in the secreted. Its function is as follows. Snake venom serine protease homolog that may act in the hemostasis system of the prey. This chain is Snake venom serine protease homolog KN7, found in Trimeresurus stejnegeri (Chinese green tree viper).